Consider the following 442-residue polypeptide: Trigger factor (442 aa).

The 86-residue stretch at 165–250 folds into the PPIase FKBP-type domain; that stretch reads DDRVIIDFEG…LQKVMAPELP (86 aa).

The protein belongs to the FKBP-type PPIase family. Tig subfamily.

The protein resides in the cytoplasm. The catalysed reaction is [protein]-peptidylproline (omega=180) = [protein]-peptidylproline (omega=0). Involved in protein export. Acts as a chaperone by maintaining the newly synthesized protein in an open conformation. Functions as a peptidyl-prolyl cis-trans isomerase. This Coxiella burnetii (strain CbuG_Q212) (Coxiella burnetii (strain Q212)) protein is Trigger factor.